The chain runs to 181 residues: Capsid protein VP4 (181 aa).

Its subcellular location is the virion. VP4 self-assembles to form, together with capsid protein VP10, an icosahedral caspid of 87 nm in diameter, with a T=43 symmetry and composed of 420 hexamers and 12 pentamers. VP4 proteins arrange into hexons, while VP10 proteins form the pentameric densities located at the 5-fold axes in the virion. The stoichiometry of VP4:VP10 is 42:1. This chain is Capsid protein VP4, found in Sulfolobus (SPV1).